A 327-amino-acid polypeptide reads, in one-letter code: Zinc transport protein ZntB (327 aa).

The Cytoplasmic segment spans residues 1 to 273; the sequence is MEAIKGADVN…ARRTYTMSLM (273 aa). Residues 274–294 form a helical membrane-spanning segment; the sequence is AMVFLPSTFLTGLFGVNLGGI. At 295 to 300 the chain is on the periplasmic side; the sequence is PGGGWR. A helical membrane pass occupies residues 301–321; it reads FGFSLFCILLVVLIGGVALWL. Residues 322-327 are Cytoplasmic-facing; sequence HRSKWL.

Belongs to the CorA metal ion transporter (MIT) (TC 1.A.35) family.

The protein localises to the cell inner membrane. The catalysed reaction is Zn(2+)(out) + H(+)(out) = Zn(2+)(in) + H(+)(in). Its function is as follows. Zinc transporter. Acts as a Zn(2+):proton symporter, which likely mediates zinc ion uptake. The sequence is that of Zinc transport protein ZntB from Escherichia fergusonii (strain ATCC 35469 / DSM 13698 / CCUG 18766 / IAM 14443 / JCM 21226 / LMG 7866 / NBRC 102419 / NCTC 12128 / CDC 0568-73).